A 208-amino-acid chain; its full sequence is dITP/XTP pyrophosphatase (208 aa).

A substrate-binding site is contributed by 16 to 21; the sequence is SNNKGK. Asp-79 serves as the catalytic Proton acceptor. Asp-79 is a Mg(2+) binding site. Substrate is bound by residues Ser-80, 166-169, Lys-189, and 194-195; these read FGYD and HR.

It belongs to the HAM1 NTPase family. Homodimer. Requires Mg(2+) as cofactor.

The enzyme catalyses XTP + H2O = XMP + diphosphate + H(+). It catalyses the reaction dITP + H2O = dIMP + diphosphate + H(+). The catalysed reaction is ITP + H2O = IMP + diphosphate + H(+). In terms of biological role, pyrophosphatase that catalyzes the hydrolysis of nucleoside triphosphates to their monophosphate derivatives, with a high preference for the non-canonical purine nucleotides XTP (xanthosine triphosphate), dITP (deoxyinosine triphosphate) and ITP. Seems to function as a house-cleaning enzyme that removes non-canonical purine nucleotides from the nucleotide pool, thus preventing their incorporation into DNA/RNA and avoiding chromosomal lesions. The protein is dITP/XTP pyrophosphatase of Acinetobacter baumannii (strain ACICU).